The following is a 185-amino-acid chain: Ribosome-recycling factor (185 aa).

It belongs to the RRF family.

The protein localises to the cytoplasm. Its function is as follows. Responsible for the release of ribosomes from messenger RNA at the termination of protein biosynthesis. May increase the efficiency of translation by recycling ribosomes from one round of translation to another. This is Ribosome-recycling factor from Streptococcus suis (strain 98HAH33).